Here is a 102-residue protein sequence, read N- to C-terminus: NADH-quinone oxidoreductase subunit K (102 aa).

3 consecutive transmembrane segments (helical) span residues Ile5–Leu25, Ile31–Phe51, and Phe66–Phe86.

Belongs to the complex I subunit 4L family. In terms of assembly, NDH-1 is composed of 14 different subunits. Subunits NuoA, H, J, K, L, M, N constitute the membrane sector of the complex.

Its subcellular location is the cell inner membrane. The catalysed reaction is a quinone + NADH + 5 H(+)(in) = a quinol + NAD(+) + 4 H(+)(out). Its function is as follows. NDH-1 shuttles electrons from NADH, via FMN and iron-sulfur (Fe-S) centers, to quinones in the respiratory chain. The immediate electron acceptor for the enzyme in this species is believed to be ubiquinone. Couples the redox reaction to proton translocation (for every two electrons transferred, four hydrogen ions are translocated across the cytoplasmic membrane), and thus conserves the redox energy in a proton gradient. The sequence is that of NADH-quinone oxidoreductase subunit K from Bartonella quintana (strain Toulouse) (Rochalimaea quintana).